A 241-amino-acid chain; its full sequence is Putative inactive serine protease 58 (241 aa).

Residues 1–17 (MKLAFLCILSTLLRTFA) form the signal peptide. The Peptidase S1 domain occupies 18-239 (YNPDHIAGTT…YLPWIEDTMK (222 aa)). An intrachain disulfide couples cysteine 41 to cysteine 57. Catalysis depends on charge relay system residues histidine 56 and aspartate 101. Disulfide bonds link cysteine 133–cysteine 201, cysteine 165–cysteine 180, and cysteine 191–cysteine 215. Asparagine 156 carries an N-linked (GlcNAc...) asparagine glycan.

This sequence belongs to the peptidase S1 family.

It localises to the secreted. The enzyme catalyses Preferential cleavage: Arg-|-Xaa, Lys-|-Xaa.. The protein is Putative inactive serine protease 58 (Prss58) of Mus musculus (Mouse).